Consider the following 96-residue polypeptide: Large ribosomal subunit protein bL28 (96 aa).

Residues 1-24 form a disordered region; the sequence is MSRSCELTGKGVQSGHNVSHANNK.

This sequence belongs to the bacterial ribosomal protein bL28 family.

The chain is Large ribosomal subunit protein bL28 from Sinorhizobium fredii (strain NBRC 101917 / NGR234).